Here is an 84-residue protein sequence, read N- to C-terminus: Anaphase-promoting complex subunit 11 (84 aa).

The Zn(2+) site is built by Cys-23, Cys-26, Cys-34, Cys-37, Cys-44, Cys-51, His-53, His-56, His-58, Cys-59, Cys-73, and Cys-76. The segment at 34-77 (CPDCKVPGDDCPLVWGQCSHCFHMHCILKWLHAQQVQQHCPMCR) adopts an RING-type zinc-finger fold.

This sequence belongs to the RING-box family. In terms of assembly, the mammalian APC/C is composed at least of 14 distinct subunits ANAPC1, ANAPC2, CDC27/APC3, ANAPC4, ANAPC5, CDC16/APC6, ANAPC7, CDC23/APC8, ANAPC10, ANAPC11, CDC26/APC12, ANAPC13, ANAPC15 and ANAPC16 that assemble into a complex of at least 19 chains with a combined molecular mass of around 1.2 MDa; APC/C interacts with FZR1 and FBXO5. Interacts with the cullin domain of ANAPC2. Interacts with UBE2D2. In terms of processing, auto-ubiquitinated. In terms of tissue distribution, expressed at high levels in skeletal muscle and heart; in moderate levels in brain, kidney, and liver; and at low levels in colon, thymus, spleen, small intestine, placenta, lung and peripheral blood leukocyte.

Its subcellular location is the cytoplasm. The protein resides in the nucleus. The protein operates within protein modification; protein ubiquitination. In terms of biological role, together with the cullin protein ANAPC2, constitutes the catalytic component of the anaphase promoting complex/cyclosome (APC/C), a cell cycle-regulated E3 ubiquitin ligase that controls progression through mitosis and the G1 phase of the cell cycle. The APC/C complex acts by mediating ubiquitination and subsequent degradation of target proteins: it mainly mediates the formation of 'Lys-11'-linked polyubiquitin chains and, to a lower extent, the formation of 'Lys-48'- and 'Lys-63'-linked polyubiquitin chains. The APC/C complex catalyzes assembly of branched 'Lys-11'-/'Lys-48'-linked branched ubiquitin chains on target proteins. May recruit the E2 ubiquitin-conjugating enzymes to the complex. This chain is Anaphase-promoting complex subunit 11 (ANAPC11), found in Homo sapiens (Human).